Here is a 722-residue protein sequence, read N- to C-terminus: 1,4-alpha-glucan branching enzyme GlgB (722 aa).

The active-site Nucleophile is the Asp-401. Glu-454 (proton donor) is an active-site residue.

Belongs to the glycosyl hydrolase 13 family. GlgB subfamily. As to quaternary structure, monomer.

The enzyme catalyses Transfers a segment of a (1-&gt;4)-alpha-D-glucan chain to a primary hydroxy group in a similar glucan chain.. Its pathway is glycan biosynthesis; glycogen biosynthesis. Catalyzes the formation of the alpha-1,6-glucosidic linkages in glycogen by scission of a 1,4-alpha-linked oligosaccharide from growing alpha-1,4-glucan chains and the subsequent attachment of the oligosaccharide to the alpha-1,6 position. This Rubrobacter xylanophilus (strain DSM 9941 / JCM 11954 / NBRC 16129 / PRD-1) protein is 1,4-alpha-glucan branching enzyme GlgB.